A 363-amino-acid chain; its full sequence is Aminomethyltransferase (363 aa).

Belongs to the GcvT family. In terms of assembly, the glycine cleavage system is composed of four proteins: P, T, L and H.

It catalyses the reaction N(6)-[(R)-S(8)-aminomethyldihydrolipoyl]-L-lysyl-[protein] + (6S)-5,6,7,8-tetrahydrofolate = N(6)-[(R)-dihydrolipoyl]-L-lysyl-[protein] + (6R)-5,10-methylene-5,6,7,8-tetrahydrofolate + NH4(+). In terms of biological role, the glycine cleavage system catalyzes the degradation of glycine. In Thermosipho melanesiensis (strain DSM 12029 / CIP 104789 / BI429), this protein is Aminomethyltransferase.